The chain runs to 90 residues: DNA-binding protein HU-beta (90 aa).

This sequence belongs to the bacterial histone-like protein family. As to quaternary structure, heterodimer of an alpha and a beta chain.

Functionally, histone-like DNA-binding protein which is capable of wrapping DNA to stabilize it, and thus to prevent its denaturation under extreme environmental conditions. The chain is DNA-binding protein HU-beta (hupB) from Escherichia coli O6:H1 (strain CFT073 / ATCC 700928 / UPEC).